Here is a 272-residue protein sequence, read N- to C-terminus: Large ribosomal subunit protein uL2cz/uL2cy (272 aa).

2 disordered regions span residues 1–33 (MAIHLYKTSTSSTRNGAVQVKSNPRNNLISGQR) and 220–272 (VMNP…RRSK). An N-methylalanine modification is found at Ala-2. Polar residues predominate over residues 7-30 (KTSTSSTRNGAVQVKSNPRNNLIS).

The protein belongs to the universal ribosomal protein uL2 family. In terms of assembly, component of the chloroplast large ribosomal subunit (LSU). Mature 70S chloroplast ribosomes of higher plants consist of a small (30S) and a large (50S) subunit. The 30S small subunit contains 1 molecule of ribosomal RNA (16S rRNA) and 24 different proteins. The 50S large subunit contains 3 rRNA molecules (23S, 5S and 4.5S rRNA) and 33 different proteins.

It is found in the plastid. It localises to the chloroplast. In terms of biological role, component of the chloroplast ribosome (chloro-ribosome), a dedicated translation machinery responsible for the synthesis of chloroplast genome-encoded proteins, including proteins of the transcription and translation machinery and components of the photosynthetic apparatus. The chain is Large ribosomal subunit protein uL2cz/uL2cy (rpl2-A) from Spinacia oleracea (Spinach).